We begin with the raw amino-acid sequence, 595 residues long: Aspartate--tRNA(Asp/Asn) ligase (595 aa).

Glu175 contributes to the L-aspartate binding site. The aspartate stretch occupies residues 199–202; sequence QQYK. L-aspartate-binding residues include Arg221 and His454. An ATP-binding site is contributed by 221–223; the sequence is RDE. Position 488 (Glu488) interacts with ATP. Arg495 contacts L-aspartate. Residue 540–543 participates in ATP binding; the sequence is GIDR.

The protein belongs to the class-II aminoacyl-tRNA synthetase family. Type 1 subfamily. In terms of assembly, homodimer.

It localises to the cytoplasm. The catalysed reaction is tRNA(Asx) + L-aspartate + ATP = L-aspartyl-tRNA(Asx) + AMP + diphosphate. Its function is as follows. Aspartyl-tRNA synthetase with relaxed tRNA specificity since it is able to aspartylate not only its cognate tRNA(Asp) but also tRNA(Asn). Reaction proceeds in two steps: L-aspartate is first activated by ATP to form Asp-AMP and then transferred to the acceptor end of tRNA(Asp/Asn). The protein is Aspartate--tRNA(Asp/Asn) ligase of Rhizobium meliloti (strain 1021) (Ensifer meliloti).